We begin with the raw amino-acid sequence, 459 residues long: Hepatocyte nuclear factor 3-beta (459 aa).

Residues 14 to 93 form a transactivation domain 1 region; sequence DWSSYYAEPE…AGAMAGMSGS (80 aa). The short motif at 106–113 is the Nuclear localization signal element; the sequence is LSPSLSPL. Threonine 156 bears the Phosphothreonine mark. The segment at residues 159–252 is a DNA-binding region (fork-head); the sequence is KPPYSYISLI…FENGCYLRRQ (94 aa). Serine 212 bears the Phosphoserine mark. Residues 268-281 show a composition bias toward low complexity; it reads GAASSGGKKTAPGS. Residues 268 to 366 are disordered; sequence GAASSGGKKT…PGLPPEAHLK (99 aa). Serine 284 carries the post-translational modification Phosphoserine. Residues 295–311 are compositionally biased toward polar residues; sequence ASETPAGTESPHSSASP. Threonine 302 bears the Phosphothreonine mark. A phosphoserine mark is found at serine 304, serine 307, serine 308, and serine 310. The segment covering 340-353 has biased composition (low complexity); that stretch reads PGQQQQAAAHLLGP. Residues 362 to 459 are transactivation domain 2; it reads EAHLKPEHHY…VYSRPIMNSS (98 aa). Residues serine 438 and serine 459 each carry the phosphoserine modification.

Binds DNA as a monomer. Binds TLE1. Interacts with FOXA1 and FOXA3. Interacts with PRKDC. Interacts with AKT1. Interacts with TET1; this interaction may recruit TET1 to specific genomic loci to mediate their demethylation. Phosphorylation on Thr-156 abolishes binding to target promoters and subsequent transcription activation upon insulin stimulation. Restricted mainly to endoderm-derived tissues (lung, liver, stomach, and small intestine). Expressed in epididymis with region-specific expression pattern: no expression is observed in initial segment, low expression in proximal caput, gradiently higher levels of expression in middle and distal caput and highest level in corpus and cauda (at protein level).

The protein localises to the nucleus. It is found in the cytoplasm. Its function is as follows. Transcription factor that is involved in embryonic development, establishment of tissue-specific gene expression and regulation of gene expression in differentiated tissues. Is thought to act as a 'pioneer' factor opening the compacted chromatin for other proteins through interactions with nucleosomal core histones and thereby replacing linker histones at target enhancer and/or promoter sites. Binds DNA with the consensus sequence 5'-[AC]A[AT]T[AG]TT[GT][AG][CT]T[CT]-3'. In embryonic development is required for notochord formation. Involved in the development of multiple endoderm-derived organ systems such as the liver, pancreas and lungs; Foxa1 and Foxa2 seem to have at least in part redundant roles. FOXA1 and FOXA2 are essential for hepatic specification. FOXA1 and FOXA2 are required for morphogenesis and cell differentiation during formation of the lung. FOXA1 and FOXA2 are involved in bile duct formation; they positively regulate the binding glucocorticoid receptor/NR3C1 to the IL6 promoter. FOXA1 and FOXA2 regulate multiple phases of midbrain dopaminergic neuron development; they regulate expression of NEUROG2 at the beginning of mDA neurogenesis and of NR4A2 and EN1 in immature mDA neurons. Modulates the transcriptional activity of nuclear hormone receptors; inhibits AR-mediated transcription from the LCN5 promoter. Binds to fibrinogen beta promoter and is involved in IL6-induced fibrinogen beta transcriptional activation. Originally described as a transcription activator for a number of liver genes such as AFP, albumin, tyrosine aminotransferase, PEPCK, etc. Interacts with the cis-acting regulatory regions of these genes. Involved in glucose homeostasis; regulates the expression of genes important for glucose sensing in pancreatic beta-cells and glucose homeostasis. In pancreatic beta cells activates transcription of potassium channel subunits KCNJ11 and ABCC8. Involved in regulation of fat metabolism; activates transcriptional programs of lipid metabolism and ketogenesis at low insulin state. Involved in transcriptional regulation of MUC2 in the intestine. The protein is Hepatocyte nuclear factor 3-beta (Foxa2) of Mus musculus (Mouse).